A 217-amino-acid chain; its full sequence is Ribose-5-phosphate isomerase A (217 aa).

Substrate contacts are provided by residues 28–31 (TGST), 81–84 (DGAD), and 94–97 (KGGG). Glu-103 acts as the Proton acceptor in catalysis. Lys-121 is a substrate binding site.

It belongs to the ribose 5-phosphate isomerase family. Homodimer.

It carries out the reaction aldehydo-D-ribose 5-phosphate = D-ribulose 5-phosphate. Its pathway is carbohydrate degradation; pentose phosphate pathway; D-ribose 5-phosphate from D-ribulose 5-phosphate (non-oxidative stage): step 1/1. In terms of biological role, catalyzes the reversible conversion of ribose-5-phosphate to ribulose 5-phosphate. This chain is Ribose-5-phosphate isomerase A, found in Aeromonas salmonicida (strain A449).